A 170-amino-acid polypeptide reads, in one-letter code: Small ribosomal subunit protein uS5 (170 aa).

The 64-residue stretch at 11-74 folds into the S5 DRBM domain; the sequence is ILEKLVHINR…ETARRVLIHV (64 aa).

It belongs to the universal ribosomal protein uS5 family. Part of the 30S ribosomal subunit. Contacts proteins S4 and S8.

With S4 and S12 plays an important role in translational accuracy. In terms of biological role, located at the back of the 30S subunit body where it stabilizes the conformation of the head with respect to the body. The protein is Small ribosomal subunit protein uS5 of Pelagibacter ubique (strain HTCC1062).